We begin with the raw amino-acid sequence, 350 residues long: Nicotinate-nucleotide--dimethylbenzimidazole phosphoribosyltransferase (350 aa).

Glu-316 (proton acceptor) is an active-site residue.

It belongs to the CobT family.

It catalyses the reaction 5,6-dimethylbenzimidazole + nicotinate beta-D-ribonucleotide = alpha-ribazole 5'-phosphate + nicotinate + H(+). The protein operates within nucleoside biosynthesis; alpha-ribazole biosynthesis; alpha-ribazole from 5,6-dimethylbenzimidazole: step 1/2. Its function is as follows. Catalyzes the synthesis of alpha-ribazole-5'-phosphate from nicotinate mononucleotide (NAMN) and 5,6-dimethylbenzimidazole (DMB). The chain is Nicotinate-nucleotide--dimethylbenzimidazole phosphoribosyltransferase from Pseudomonas syringae pv. tomato (strain ATCC BAA-871 / DC3000).